The chain runs to 501 residues: Lysine--tRNA ligase (501 aa).

Residues Glu-410 and Glu-417 each contribute to the Mg(2+) site.

Belongs to the class-II aminoacyl-tRNA synthetase family. Homodimer. The cofactor is Mg(2+).

Its subcellular location is the cytoplasm. It carries out the reaction tRNA(Lys) + L-lysine + ATP = L-lysyl-tRNA(Lys) + AMP + diphosphate. This Shewanella halifaxensis (strain HAW-EB4) protein is Lysine--tRNA ligase.